Here is an 857-residue protein sequence, read N- to C-terminus: Leucine--tRNA ligase (857 aa).

The short motif at 42-52 is the 'HIGH' region element; that stretch reads PYPSGNLHMGH. The 'KMSKS' region signature appears at 615–619; the sequence is KMSKS. An ATP-binding site is contributed by K618.

It belongs to the class-I aminoacyl-tRNA synthetase family.

The protein localises to the cytoplasm. The catalysed reaction is tRNA(Leu) + L-leucine + ATP = L-leucyl-tRNA(Leu) + AMP + diphosphate. The chain is Leucine--tRNA ligase from Thermosynechococcus vestitus (strain NIES-2133 / IAM M-273 / BP-1).